Consider the following 577-residue polypeptide: Glycine--tRNA ligase (577 aa).

Residues arginine 98 and glutamate 164 each coordinate substrate. ATP contacts are provided by residues 196–198 (RNE), 206–211 (IRLREF), 328–329 (EC), and 451–454 (GIDR). 211–215 (FTQAE) provides a ligand contact to substrate. Substrate is bound at residue 447 to 451 (EPSYG).

The protein belongs to the class-II aminoacyl-tRNA synthetase family.

It localises to the cytoplasm. The catalysed reaction is tRNA(Gly) + glycine + ATP = glycyl-tRNA(Gly) + AMP + diphosphate. Catalyzes the attachment of glycine to tRNA(Gly). This Methanocaldococcus jannaschii (strain ATCC 43067 / DSM 2661 / JAL-1 / JCM 10045 / NBRC 100440) (Methanococcus jannaschii) protein is Glycine--tRNA ligase.